The following is a 152-amino-acid chain: Deoxyuridine 5'-triphosphate nucleotidohydrolase (152 aa).

Substrate contacts are provided by residues R70 to G72, N83, T87 to D89, and K97.

It belongs to the dUTPase family. It depends on Mg(2+) as a cofactor.

The enzyme catalyses dUTP + H2O = dUMP + diphosphate + H(+). The protein operates within pyrimidine metabolism; dUMP biosynthesis; dUMP from dCTP (dUTP route): step 2/2. In terms of biological role, this enzyme is involved in nucleotide metabolism: it produces dUMP, the immediate precursor of thymidine nucleotides and it decreases the intracellular concentration of dUTP so that uracil cannot be incorporated into DNA. This chain is Deoxyuridine 5'-triphosphate nucleotidohydrolase, found in Corynebacterium diphtheriae (strain ATCC 700971 / NCTC 13129 / Biotype gravis).